The chain runs to 393 residues: Protein DDI1 homolog 2 (393 aa).

Positions 1–81 (MLITVYCVRR…VILRQKEAPE (81 aa)) constitute a Ubiquitin-like domain. The tract at residues 82–127 (TRPAAPFPGLDFSTIAVPGASSQPDPSQPQAPPPPPDTSSFPQGLD) is disordered. The segment covering 107–118 (PSQPQAPPPPPD) has biased composition (pro residues). The active site involves Asp246. The Ubiquitin-binding motif lies at 370-389 (EEIADRELAEVLQKSADEAD).

This sequence belongs to the DDI1 family. As to quaternary structure, homodimer.

It localises to the cytoplasm. It is found in the cytosol. The protein resides in the chromosome. Functionally, aspartic protease that mediates the cleavage of NFE2L1/NRF1 at 'Leu-104', thereby promoting release of NFE2L1/NRF1 from the endoplasmic reticulum membrane. Ubiquitination of NFE2L1/NRF1 is a prerequisite for cleavage, suggesting that DDI2 specifically recognizes and binds ubiquitinated NFE2L1/NRF1. Seems to act as a proteasomal shuttle which links the proteasome and replication fork proteins like RTF2. Required for cellular survival following replication stress. In Xenopus laevis (African clawed frog), this protein is Protein DDI1 homolog 2 (ddi2).